The following is an 805-amino-acid chain: Leucine--tRNA ligase (805 aa).

Positions 40–51 (PYPSGQGLHVGH) match the 'HIGH' region motif. The 'KMSKS' region motif lies at 577–581 (KMSKS). Lys580 is a binding site for ATP.

The protein belongs to the class-I aminoacyl-tRNA synthetase family.

The protein localises to the cytoplasm. It carries out the reaction tRNA(Leu) + L-leucine + ATP = L-leucyl-tRNA(Leu) + AMP + diphosphate. This is Leucine--tRNA ligase from Pediococcus pentosaceus (strain ATCC 25745 / CCUG 21536 / LMG 10740 / 183-1w).